Consider the following 1225-residue polypeptide: Structural maintenance of chromosomes protein 1 (1225 aa).

33-40 (GPNGSGKS) contacts ATP. Residues 173 to 489 (SGSIQYKKEY…SANNQEYDLN (317 aa)) are a coiled coil. The SMC hinge domain occupies 527 to 641 (PGVKGLVHDL…CNTLNIAKDL (115 aa)). The stretch at 679–1063 (KEEYQSLMSL…LKIKKKRKEL (385 aa)) forms a coiled coil. Positions 1057 to 1061 (KKKRK) match the Nuclear localization signal motif.

This sequence belongs to the SMC family. SMC1 subfamily. Cohesin complexes are composed of the SMC1 and SMC3 heterodimer attached via their SMC hinge domain, MCD1/SCC1 which link them, and IRR1/SCC3, which interacts with MCD1. The cohesin complex also interacts with SCC2, which is required for its association with chromosomes.

It is found in the nucleus. The protein localises to the chromosome. Its function is as follows. Involved in chromosome cohesion during cell cycle and in DNA repair. Central component of cohesin complex. The cohesin complex is required for the cohesion of sister chromatids after DNA replication. The cohesin complex apparently forms a large proteinaceous ring within which sister chromatids can be trapped. At anaphase, the complex is cleaved and dissociates from chromatin, allowing sister chromatids to segregate. This Saccharomyces cerevisiae (strain ATCC 204508 / S288c) (Baker's yeast) protein is Structural maintenance of chromosomes protein 1 (SMC1).